Here is a 321-residue protein sequence, read N- to C-terminus: MAYQIECLETRVEEDQGQYGQFALHPLAPGQGITVGNALRRVLLSNLPGSAVTAVRIAGVNHEFSTIPGVREDVMDILLQMKQLVIRSHTSEPQMGRLFAQAPENEPLTVTAGMVQLGSEVEVVNPNHYIATLMPGATLEMEFKIEKDRGYRSVERVRDDRLALDYLQLDAVFMPVRRVNYTVDSVRSAGAEGDRQLQDYLKLEIWTNGSLTPQDALNQAATILVDLFSPLKEVPLHTSEATATDDHDETGQIPIEQLNLSVRAYNCLKRAQVNTVADLLEYSQEELLEIKNFGQKSAEEVIEALQKHLGITLPPQKAARN.

The alpha N-terminal domain (alpha-NTD) stretch occupies residues 1–235; sequence MAYQIECLET…DLFSPLKEVP (235 aa). The alpha C-terminal domain (alpha-CTD) stretch occupies residues 252–321; that stretch reads QIPIEQLNLS…TLPPQKAARN (70 aa).

It belongs to the RNA polymerase alpha chain family. Homodimer. In cyanobacteria the RNAP catalytic core is composed of 2 alpha, 1 beta, 1 beta', 1 gamma and 1 omega subunit. When a sigma factor is associated with the core the holoenzyme is formed, which can initiate transcription.

The catalysed reaction is RNA(n) + a ribonucleoside 5'-triphosphate = RNA(n+1) + diphosphate. Its function is as follows. DNA-dependent RNA polymerase catalyzes the transcription of DNA into RNA using the four ribonucleoside triphosphates as substrates. In Thermosynechococcus vestitus (strain NIES-2133 / IAM M-273 / BP-1), this protein is DNA-directed RNA polymerase subunit alpha.